The sequence spans 187 residues: MILPINTYSDPVLAMKAKPLKGVDSAIEELIAEMFDTMYKAPGIGLAAPQVGHSLRLVVVDISTIKEYADFKPMVVINPRIVAVRGRSLMEEGCLSVPGIAGNVVRPSAITLHYRDEKFEEHTADFHSMMARVLQHEIDHLDGTLFVDRMDKRDRRKIQKELDAIAEGRVKADYPLARDVNRVEAEA.

The Fe cation site is built by C94 and H136. Residue E137 is part of the active site. H140 contacts Fe cation.

It belongs to the polypeptide deformylase family. The cofactor is Fe(2+).

It catalyses the reaction N-terminal N-formyl-L-methionyl-[peptide] + H2O = N-terminal L-methionyl-[peptide] + formate. In terms of biological role, removes the formyl group from the N-terminal Met of newly synthesized proteins. Requires at least a dipeptide for an efficient rate of reaction. N-terminal L-methionine is a prerequisite for activity but the enzyme has broad specificity at other positions. This chain is Peptide deformylase, found in Chlorobaculum tepidum (strain ATCC 49652 / DSM 12025 / NBRC 103806 / TLS) (Chlorobium tepidum).